A 275-amino-acid chain; its full sequence is uncharacterized protein (275 aa).

The next 6 membrane-spanning stretches (helical) occupy residues 25–45, 70–90, 107–127, 149–169, 203–223, and 247–267; these read LGYF…FMTA, LLFF…LSAI, IGNF…LRFV, FGQW…IVQF, IARA…AMTA, and ILSI…MKGI.

It localises to the cell membrane. This is an uncharacterized protein from Bacillus subtilis (strain 168).